A 112-amino-acid polypeptide reads, in one-letter code: uncharacterized protein (112 aa).

2 consecutive transmembrane segments (helical) span residues 44-63 (VITGIVGYVFVVVYVVLHSL) and 68-90 (LAALAMALVFFAITGEYGGKLVH).

The protein localises to the cell membrane. This is an uncharacterized protein from Archaeoglobus fulgidus (strain ATCC 49558 / DSM 4304 / JCM 9628 / NBRC 100126 / VC-16).